Consider the following 364-residue polypeptide: CLIP domain-containing serine protease B15 (364 aa).

Positions 1-19 (MRWLVCLIVSWCSLVPLGA) are cleaved as a signal peptide. The Clip domain maps to 30-89 (PCQTPSGTAGTCEPVKNCSYVRKILKSPDFSHYDTTYLDTLKCGDLMVPMRKKPIPLLCC). Disulfide bonds link C31/C88, C41/C72, and C47/C89. N-linked (GlcNAc...) asparagine glycosylation occurs at N46. A Peptidase S1 domain is found at 107–359 (IYFGEETERG…YLDWMETVMF (253 aa)). The N-linked (GlcNAc...) asparagine glycan is linked to N131. C137 and C153 form a disulfide bridge. H152 serves as the catalytic Charge relay system. Residues N171, N177, and N206 are each glycosylated (N-linked (GlcNAc...) asparagine). Residue D212 is the Charge relay system of the active site. C279 and C296 are oxidised to a cystine. Residues N287 and N301 are each glycosylated (N-linked (GlcNAc...) asparagine). A disulfide bridge connects residues C306 and C335. The active-site Charge relay system is the S310.

The protein belongs to the peptidase S1 family. CLIP subfamily. In terms of processing, N-glycosylated. Proteolytically cleaved. In terms of tissue distribution, expressed by a subpopulation of hemocytes.

Its subcellular location is the secreted. In terms of biological role, serine protease. Plays a role in innate immunity against infections by parasite P.berghei and by Gram-negative bacteria such as E.coli. In response to P.berghei infection, contributes to the clearing of parasite ookinetes independent of melanization, an innate immune response which consists in the deposition of melanin pigments on invading pathogens and parasites. The polypeptide is CLIP domain-containing serine protease B15 (Anopheles gambiae (African malaria mosquito)).